The primary structure comprises 369 residues: Aminomethyltransferase (369 aa).

This sequence belongs to the GcvT family. In terms of assembly, the glycine cleavage system is composed of four proteins: P, T, L and H.

The catalysed reaction is N(6)-[(R)-S(8)-aminomethyldihydrolipoyl]-L-lysyl-[protein] + (6S)-5,6,7,8-tetrahydrofolate = N(6)-[(R)-dihydrolipoyl]-L-lysyl-[protein] + (6R)-5,10-methylene-5,6,7,8-tetrahydrofolate + NH4(+). Its function is as follows. The glycine cleavage system catalyzes the degradation of glycine. The sequence is that of Aminomethyltransferase from Rippkaea orientalis (strain PCC 8801 / RF-1) (Cyanothece sp. (strain PCC 8801)).